Consider the following 913-residue polypeptide: MCAGTMKIISPSLTNSFFRCTLRFVACLFWIGYSQGTTHVLRFGGIFESVESGPSGAEELAFRFAVNTINRNRTLLPNTTITYDTQRINLYDSFEASRKACEQLSLGVAAIFGPSHSSSANAVQSICNALGVPHIQTRWKHQVSDNKDSFYVSLYPDFSSLSRAILDLVQFFKWKTVTIAYDDSTGLIRLQELIKAPSRYNLRLKIRQLPIDTKDAKPLLKEMKRGKEFHVIFDCSHDMAAGILKQALAMGMMTEYYHYIFTTLDLFALDVEPYRYSGVNMTGFRILNIENSQVLSIIEKWSMERLQAPPKPDSGLLDGFMTTDAALMYDAVHVASVAVQQFPQMTVSSLQCNRHKPWRFGARFINLIKEAHWEGLTGRITFNKTNGLRTDFDLDVISLKEEGLEKIGTWDPTSGLNMTDNQKGKPANITDSLSNRSLIVTTILEEPYVMFKKSDKPLYGKARFEGYCIDLLEKLSRILGFEYEVRLVEDGKYGAKDDSTQQWNGMVRELMDHKADLAVAPLAITYVREQVIDFTKPFMTLGIGILYRKPNGTNPGVFSFLNPLSPDIWMYILLAYLGVSCVLFVIARFSPYEWYNPHPCNPDSDVVENNFTLLNSFWFGVGALMQQGSELMPKALSTRIVGGIWWFFTLIIISSYTANLAAFLTVERMESPIDSADDLAKQTKIEYGAVQDGATMTFFKKSRIPTYEKMWAFMNSRSQSVLVKNNEEGIQRALTSDYAFLMESTTIEFVTQRNCNLTQIGGLIDSKGYGVGTPMGSPYRDKITIAILQLQEEGVLHMMKEKWWRGNGCPEEESKEASALGVQNIGGIFIVLAAGLVLSVFVAVGEFLYKSKKNAQLEKRSFCSAMVEELRMSLKCQRRLKHKPQPPVIVKTEEVINMHTFNDRRLPGKETMA.

The Extracellular portion of the chain corresponds to 1 to 566 (MCAGTMKIIS…VFSFLNPLSP (566 aa)). N-linked (GlcNAc...) asparagine glycosylation is found at N72, N78, N280, N383, N417, N428, and N435. C101 and C352 are disulfide-bonded. The L-glutamate site is built by P521, A523, and R528. A glycan (N-linked (GlcNAc...) asparagine) is linked at N551. The helical transmembrane segment at 567–587 (DIWMYILLAYLGVSCVLFVIA) threads the bilayer. Over 588–643 (RFSPYEWYNPHPCNPDSDVVENNFTLLNSFWFGVGALMQQGSELMPKALSTRIVGG) the chain is Cytoplasmic. The chain crosses the membrane as a helical span at residues 644-664 (IWWFFTLIIISSYTANLAAFL). Topologically, residues 665-824 (TVERMESPID…KEASALGVQN (160 aa)) are extracellular. A694, T695, and E743 together coordinate L-glutamate. C755 and C809 are disulfide-bonded. A glycan (N-linked (GlcNAc...) asparagine) is linked at N756. The helical transmembrane segment at 825–845 (IGGIFIVLAAGLVLSVFVAVG) threads the bilayer. Residues 846–913 (EFLYKSKKNA…RRLPGKETMA (68 aa)) lie on the Cytoplasmic side of the membrane.

The protein belongs to the glutamate-gated ion channel (TC 1.A.10.1) family. GRIK2 subfamily. Homotetramer and heterotetramer with GRIK5. Tetramers may be formed by the dimerization of dimers.

The protein localises to the cell membrane. Its subcellular location is the postsynaptic cell membrane. The enzyme catalyses Ca(2+)(in) = Ca(2+)(out). It carries out the reaction Na(+)(in) = Na(+)(out). With respect to regulation, cold receptor activity activated by temperatures between 10-19 degrees Celsius. Functionally, ionotropic glutamate receptor that functions as a cation-permeable ligand-gated ion channel, gated by L-glutamate and the glutamatergic agonist kainic acid. L-glutamate acts as an excitatory neurotransmitter at many synapses in the central nervous system. Binding of the excitatory neurotransmitter L-glutamate induces a conformation change, leading to the opening of the cation channel, and thereby converts the chemical signal to an electrical impulse. The receptor then desensitizes rapidly and enters a transient inactive state, characterized by the presence of bound agonist. Its function is as follows. Independent of its ionotropic glutamate receptor activity, acts as a thermoreceptor conferring sensitivity to cold temperatures. Functions in dorsal root ganglion neurons. This is Glutamate receptor ionotropic, kainate 2 (grik2) from Xenopus laevis (African clawed frog).